The chain runs to 278 residues: Diaminopimelate epimerase (278 aa).

Substrate-binding residues include Asn13 and Asn66. Cys75 acts as the Proton donor in catalysis. Substrate is bound by residues Gly76 to Asn77, Asn162, Asn195, and Glu213 to Arg214. Cys222 functions as the Proton acceptor in the catalytic mechanism. Residue Gly223–Thr224 participates in substrate binding.

This sequence belongs to the diaminopimelate epimerase family. Homodimer.

The protein resides in the cytoplasm. It carries out the reaction (2S,6S)-2,6-diaminopimelate = meso-2,6-diaminopimelate. It functions in the pathway amino-acid biosynthesis; L-lysine biosynthesis via DAP pathway; DL-2,6-diaminopimelate from LL-2,6-diaminopimelate: step 1/1. Catalyzes the stereoinversion of LL-2,6-diaminopimelate (L,L-DAP) to meso-diaminopimelate (meso-DAP), a precursor of L-lysine and an essential component of the bacterial peptidoglycan. In Trichodesmium erythraeum (strain IMS101), this protein is Diaminopimelate epimerase.